Reading from the N-terminus, the 73-residue chain is Translation initiation factor IF-1 (73 aa).

An S1-like domain is found at 1-73; the sequence is MANKEELIEF…SKGRITYRAR (73 aa).

The protein belongs to the IF-1 family. Component of the 30S ribosomal translation pre-initiation complex which assembles on the 30S ribosome in the order IF-2 and IF-3, IF-1 and N-formylmethionyl-tRNA(fMet); mRNA recruitment can occur at any time during PIC assembly.

The protein resides in the cytoplasm. In terms of biological role, one of the essential components for the initiation of protein synthesis. Stabilizes the binding of IF-2 and IF-3 on the 30S subunit to which N-formylmethionyl-tRNA(fMet) subsequently binds. Helps modulate mRNA selection, yielding the 30S pre-initiation complex (PIC). Upon addition of the 50S ribosomal subunit IF-1, IF-2 and IF-3 are released leaving the mature 70S translation initiation complex. This Acinetobacter baylyi (strain ATCC 33305 / BD413 / ADP1) protein is Translation initiation factor IF-1.